The sequence spans 68 residues: Molybdenum-pterin-binding protein 2 (68 aa).

Residues 2 to 68 enclose the Mop domain; that stretch reads SISARNQLKG…VKSTDVMILA (67 aa).

Its function is as follows. Binds one mole of molybdenum per mole of protein and contains a pterin. The sequence is that of Molybdenum-pterin-binding protein 2 (mopII) from Clostridium pasteurianum.